Consider the following 249-residue polypeptide: 1-(5-phosphoribosyl)-5-[(5-phosphoribosylamino)methylideneamino] imidazole-4-carboxamide isomerase (249 aa).

Catalysis depends on Asp-11, which acts as the Proton acceptor. The active-site Proton donor is Asp-133.

This sequence belongs to the HisA/HisF family.

The protein localises to the cytoplasm. It carries out the reaction 1-(5-phospho-beta-D-ribosyl)-5-[(5-phospho-beta-D-ribosylamino)methylideneamino]imidazole-4-carboxamide = 5-[(5-phospho-1-deoxy-D-ribulos-1-ylimino)methylamino]-1-(5-phospho-beta-D-ribosyl)imidazole-4-carboxamide. It functions in the pathway amino-acid biosynthesis; L-histidine biosynthesis; L-histidine from 5-phospho-alpha-D-ribose 1-diphosphate: step 4/9. The sequence is that of 1-(5-phosphoribosyl)-5-[(5-phosphoribosylamino)methylideneamino] imidazole-4-carboxamide isomerase from Mannheimia succiniciproducens (strain KCTC 0769BP / MBEL55E).